The primary structure comprises 185 residues: Dual specificity protein phosphatase 3 (185 aa).

Positions 28-179 constitute a Tyrosine-protein phosphatase domain; it reads QPCNEVTPRI…LCQLNDRLAK (152 aa). Catalysis depends on Cys124, which acts as the Phosphocysteine intermediate.

It belongs to the protein-tyrosine phosphatase family. Non-receptor class dual specificity subfamily. In terms of assembly, microtubule inner protein component of sperm flagellar doublet microtubules. Interacts with VRK3; this interaction activates DUSP3 phosphatase activity.

The protein resides in the nucleus. Its subcellular location is the cytoplasm. The protein localises to the cytoskeleton. It is found in the flagellum axoneme. The enzyme catalyses O-phospho-L-tyrosyl-[protein] + H2O = L-tyrosyl-[protein] + phosphate. The catalysed reaction is O-phospho-L-seryl-[protein] + H2O = L-seryl-[protein] + phosphate. It carries out the reaction O-phospho-L-threonyl-[protein] + H2O = L-threonyl-[protein] + phosphate. Shows activity both for tyrosine-protein phosphate and serine-protein phosphate, but displays a strong preference toward phosphotyrosines. Specifically dephosphorylates and inactivates ERK1 and ERK2. This Homo sapiens (Human) protein is Dual specificity protein phosphatase 3 (DUSP3).